Here is a 456-residue protein sequence, read N- to C-terminus: Trigger factor (456 aa).

Positions 192–277 constitute a PPIase FKBP-type domain; sequence GDTVVIDFVG…IHEVKTKEVP (86 aa).

The protein belongs to the FKBP-type PPIase family. Tig subfamily.

It localises to the cytoplasm. The enzyme catalyses [protein]-peptidylproline (omega=180) = [protein]-peptidylproline (omega=0). Its function is as follows. Involved in protein export. Acts as a chaperone by maintaining the newly synthesized protein in an open conformation. Functions as a peptidyl-prolyl cis-trans isomerase. The sequence is that of Trigger factor from Streptococcus pyogenes serotype M12 (strain MGAS9429).